The chain runs to 111 residues: Putative pterin-4-alpha-carbinolamine dehydratase (111 aa).

The protein belongs to the pterin-4-alpha-carbinolamine dehydratase family.

It carries out the reaction (4aS,6R)-4a-hydroxy-L-erythro-5,6,7,8-tetrahydrobiopterin = (6R)-L-erythro-6,7-dihydrobiopterin + H2O. The sequence is that of Putative pterin-4-alpha-carbinolamine dehydratase from Marinobacter nauticus (strain ATCC 700491 / DSM 11845 / VT8) (Marinobacter aquaeolei).